Here is a 162-residue protein sequence, read N- to C-terminus: Corticoliberin-2 (162 aa).

A signal peptide spans 1-24 (MRLNFLVTTMALLVAFPPPYECRA). A propeptide spanning residues 25–119 (IDSSSNQPVT…ALDSEERERR (95 aa)) is cleaved from the precursor. Positions 57 to 79 (LGNRNKNSPRSPPDTYPEASQYS) are disordered. Phenylalanine 160 carries the phenylalanine amide modification.

This sequence belongs to the sauvagine/corticotropin-releasing factor/urotensin I family.

It localises to the secreted. Its function is as follows. This hormone from hypothalamus regulates the release of corticotropin from pituitary gland. This chain is Corticoliberin-2 (crf2), found in Catostomus commersonii (White sucker).